Consider the following 430-residue polypeptide: Adenylosuccinate synthetase (430 aa).

GTP contacts are provided by residues 12 to 18 (GDEGKGK) and 40 to 42 (GHT). Asp13 acts as the Proton acceptor in catalysis. Positions 13 and 40 each coordinate Mg(2+). IMP contacts are provided by residues 13–16 (DEGK), 38–41 (NAGH), Thr130, Arg144, Gln224, Thr239, and Arg303. His41 functions as the Proton donor in the catalytic mechanism. A substrate-binding site is contributed by 299 to 305 (TVTGRKR). GTP is bound by residues Arg305, 331-333 (KLD), and 413-415 (STS).

This sequence belongs to the adenylosuccinate synthetase family. In terms of assembly, homodimer. Requires Mg(2+) as cofactor.

Its subcellular location is the cytoplasm. The catalysed reaction is IMP + L-aspartate + GTP = N(6)-(1,2-dicarboxyethyl)-AMP + GDP + phosphate + 2 H(+). The protein operates within purine metabolism; AMP biosynthesis via de novo pathway; AMP from IMP: step 1/2. Plays an important role in the de novo pathway of purine nucleotide biosynthesis. Catalyzes the first committed step in the biosynthesis of AMP from IMP. The protein is Adenylosuccinate synthetase of Cereibacter sphaeroides (strain ATCC 17023 / DSM 158 / JCM 6121 / CCUG 31486 / LMG 2827 / NBRC 12203 / NCIMB 8253 / ATH 2.4.1.) (Rhodobacter sphaeroides).